The following is a 215-amino-acid chain: Pyrophosphate-energized proton pump 2 (215 aa).

The next 5 membrane-spanning stretches (helical) occupy residues 16–36, 51–71, 86–106, 136–156, and 164–184; these read VYPL…TFFV, GLIA…YATV, GTNL…IVVI, GLAV…GGII, and LFGT…IVAL.

Belongs to the H(+)-translocating pyrophosphatase (TC 3.A.10) family. Homodimer. Requires Mg(2+) as cofactor.

The protein localises to the cell inner membrane. It carries out the reaction diphosphate + H2O + H(+)(in) = 2 phosphate + 2 H(+)(out). Functionally, proton pump that utilizes the energy of pyrophosphate hydrolysis as the driving force for proton movement across the membrane. Generates a proton motive force. The protein is Pyrophosphate-energized proton pump 2 (hppA2) of Rhizobium leguminosarum bv. trifolii.